The sequence spans 352 residues: Maleylacetate reductase (352 aa).

NAD(+) is bound by residues 93–94 and 115–119; these read GS and TTYAG.

Belongs to the iron-containing alcohol dehydrogenase family. The cofactor is The maleylacetate reductase family of enzymes does not require any metal ion for activity, despite being related to the family III metal-dependent polyol dehydrogenases..

The catalysed reaction is 3-oxoadipate + NAD(+) = maleylacetate + NADH + H(+). The protein operates within xenobiotic degradation; gamma-hexachlorocyclohexane degradation. In terms of biological role, catalyzes the NADH-dependent reduction of maleylacetate to beta-ketoadipate, a step in the degradation of gamma-hexachlorocyclohexane (gamma-HCH or lindane). Has an essential role in this assimilation pathway that allows S.japonicum UT26 to grow on gamma-HCH as the sole source of carbon and energy. The protein is Maleylacetate reductase of Sphingobium indicum (strain DSM 16413 / CCM 7287 / MTCC 6362 / UT26 / NBRC 101211 / UT26S) (Sphingobium japonicum).